The chain runs to 248 residues: Ribosomal RNA small subunit methyltransferase G (248 aa).

A disordered region spans residues 1-23; it reads MFHVKHVGPVEPAAGDPEVPPVA. S-adenosyl-L-methionine-binding positions include glycine 93, leucine 98, 143–144, and arginine 161; that span reads AE. The disordered stretch occupies residues 226–248; it reads VVSARRAKPPHPKSARTGKAGTR. Over residues 230–248 the composition is skewed to basic residues; sequence RRAKPPHPKSARTGKAGTR.

The protein belongs to the methyltransferase superfamily. RNA methyltransferase RsmG family.

It localises to the cytoplasm. Functionally, specifically methylates the N7 position of guanine in position 518 of 16S rRNA. This Mycolicibacterium paratuberculosis (strain ATCC BAA-968 / K-10) (Mycobacterium paratuberculosis) protein is Ribosomal RNA small subunit methyltransferase G.